Consider the following 380-residue polypeptide: DNA replication and repair protein RecF (380 aa).

ATP is bound at residue 30–37; sequence GENAQGKT.

This sequence belongs to the RecF family.

It is found in the cytoplasm. Its function is as follows. The RecF protein is involved in DNA metabolism; it is required for DNA replication and normal SOS inducibility. RecF binds preferentially to single-stranded, linear DNA. It also seems to bind ATP. The polypeptide is DNA replication and repair protein RecF (Synechococcus sp. (strain JA-2-3B'a(2-13)) (Cyanobacteria bacterium Yellowstone B-Prime)).